The chain runs to 109 residues: UPF0102 protein Suden_1901 (109 aa).

It belongs to the UPF0102 family.

This Sulfurimonas denitrificans (strain ATCC 33889 / DSM 1251) (Thiomicrospira denitrificans (strain ATCC 33889 / DSM 1251)) protein is UPF0102 protein Suden_1901.